Reading from the N-terminus, the 123-residue chain is Small ribosomal subunit protein uS12 (123 aa).

Positions 1–28 (MPTIQQLIRKPRQPKVKRSKSMHLEQCP) are disordered. The span at 9 to 21 (RKPRQPKVKRSKS) shows a compositional bias: basic residues. 3-methylthioaspartic acid is present on Asp-89.

Belongs to the universal ribosomal protein uS12 family. As to quaternary structure, part of the 30S ribosomal subunit. Contacts proteins S8 and S17. May interact with IF1 in the 30S initiation complex.

In terms of biological role, with S4 and S5 plays an important role in translational accuracy. Interacts with and stabilizes bases of the 16S rRNA that are involved in tRNA selection in the A site and with the mRNA backbone. Located at the interface of the 30S and 50S subunits, it traverses the body of the 30S subunit contacting proteins on the other side and probably holding the rRNA structure together. The combined cluster of proteins S8, S12 and S17 appears to hold together the shoulder and platform of the 30S subunit. This Ruegeria sp. (strain TM1040) (Silicibacter sp.) protein is Small ribosomal subunit protein uS12.